A 204-amino-acid chain; its full sequence is Ribosomal RNA small subunit methyltransferase G (204 aa).

S-adenosyl-L-methionine contacts are provided by residues G74, L79, 125–126 (AY), and R138.

It belongs to the methyltransferase superfamily. RNA methyltransferase RsmG family.

It is found in the cytoplasm. In terms of biological role, specifically methylates the N7 position of a guanine in 16S rRNA. The sequence is that of Ribosomal RNA small subunit methyltransferase G from Brachyspira hyodysenteriae (strain ATCC 49526 / WA1).